The sequence spans 64 residues: Large ribosomal subunit protein uL30 (64 aa).

Belongs to the universal ribosomal protein uL30 family. Part of the 50S ribosomal subunit.

The protein is Large ribosomal subunit protein uL30 of Methylorubrum extorquens (strain CM4 / NCIMB 13688) (Methylobacterium extorquens).